Here is a 188-residue protein sequence, read N- to C-terminus: Antitoxin SocA (188 aa).

As to quaternary structure, interacts with cognate toxin SocB and with ClpX.

Its function is as follows. Antitoxin component of an atypical type II toxin-antitoxin (TA) system. Unlike most type II TA systems, neutralizes the toxic activity of cognate toxin SocB by acting as an adapter to promote its degradation by ClpXP; degradation is dependent on the N-terminus of ClpX. The chain is Antitoxin SocA from Caulobacter vibrioides (strain NA1000 / CB15N) (Caulobacter crescentus).